The chain runs to 523 residues: Solute carrier family 35 member F5 (523 aa).

The next 2 membrane-spanning stretches (helical) occupy residues 69–89 (MALG…SSEL) and 101–121 (FFST…FIIW). Residue Ser-207 is modified to Phosphoserine. 8 consecutive transmembrane segments (helical) span residues 243–263 (ISFF…EALS), 268–288 (AIVN…AAVF), 296–316 (FTLS…LVNL), 327–347 (TIGS…IVMI), 361–381 (MFFG…FFLL), 395–415 (VVLM…EFLW), 420–440 (FLTS…LSII), and 452–472 (WLFF…TLLC). Residues 252 to 316 (FLANLSYQEA…SIGGVVLVNL (65 aa)) form the EamA domain.

Belongs to the SLC35F solute transporter family.

Its subcellular location is the membrane. Putative solute transporter. This is Solute carrier family 35 member F5 (SLC35F5) from Pongo abelii (Sumatran orangutan).